Here is a 150-residue protein sequence, read N- to C-terminus: MCSAGGIRRPIQIEEFKTAISGMSDMELAQIKTEIENSINHLQRSNARLGKYIAKLEGADDRLEADDSDDLENIDSGDLALYKDSVRENEIVLNNYNERVDALEQETVYRKTGHGKSKHEVEAKDNTNKGPDVDMDNSNVDVVTPNSIFI.

Phosphoserine is present on residues serine 24 and serine 68. Residues arginine 110–asparagine 139 form a disordered region. Basic and acidic residues predominate over residues lysine 118 to threonine 127.

Interacts with RPT6. Interacts with the 40S and 60S ribosomal subunits.

It is found in the cytoplasm. The protein localises to the nucleus. Its function is as follows. ATPase-dedicated chaperone that assists the formation of the RPT6-RPT3 ATPase pair, an early step in proteasome assembly. Plays a key role in maintaining homeostatic proteasome levels and adjusting proteasome assembly when demands increase, such as during proteasome stresses. Function overlaps with RPN14. The polypeptide is Translation machinery-associated protein 17 (TMA17) (Saccharomyces cerevisiae (strain ATCC 204508 / S288c) (Baker's yeast)).